We begin with the raw amino-acid sequence, 517 residues long: Acyltransferase AFT15-1 (517 aa).

The active-site Proton acceptor is His180.

The protein belongs to the plant acyltransferase family.

The protein operates within mycotoxin biosynthesis. Functionally, acyltransferase; part of the gene clusters that mediate the biosynthesis of the host-selective toxins (HSTs) AF-toxins responsible for Alternaria black spot of strawberry disease by the strawberry pathotype. AF-toxin I and III are valine derivatives of 2,3-dyhydroxy-isovaleric acid and 2-hydroxy-isovaleric acid respectively, while AF II is an isoleucine derivative of 2-hydroxy-valeric acid. These derivatives are bound to a 9,10-epoxy-8-hydroxy-9-methyl-decatrienoic acid (EDA) moiety. On cellular level, AF-toxins affect plasma membrane of susceptible cells and cause a sudden increase in loss of K(+) after a few minutes of toxin treatment. The aldo-keto reductase AFTS1 catalyzes the conversion of 2-keto-isovaleric acid (2-KIV) to 2-hydroxy-isovaleric acid (2-HIV) by reduction of its ketone to an alcohol. The acyl-CoA ligase AFT1, the hydrolase AFT2 and the enoyl-CoA hydratases AFT3 and AFT6, but also the polyketide synthase AFT9, the acyl-CoA dehydrogenase AFT10, the cytochrome P450 monooxygenase AFT11 and the oxidoreductase AFT12 are all involved in the biosynthesis of the AK-, AF- and ACT-toxin common EDA structural moiety. The exact function of each enzyme, and of additional enzymes identified within the AF-toxin clusters have still to be determined. This Alternaria alternata (Alternaria rot fungus) protein is Acyltransferase AFT15-1 (AFT15-1).